A 123-amino-acid polypeptide reads, in one-letter code: Fluoride-specific ion channel FluC (123 aa).

Transmembrane regions (helical) follow at residues 7 to 27, 39 to 59, 68 to 88, and 101 to 121; these read MAIA…SGLL, MVNS…FWGF, FFGT…YETF, and LNIL…FMLA. G75 and S78 together coordinate Na(+).

It belongs to the fluoride channel Fluc/FEX (TC 1.A.43) family.

It is found in the cell membrane. It catalyses the reaction fluoride(in) = fluoride(out). With respect to regulation, na(+) is not transported, but it plays an essential structural role and its presence is essential for fluoride channel function. Its function is as follows. Fluoride-specific ion channel. Important for reducing fluoride concentration in the cell, thus reducing its toxicity. The sequence is that of Fluoride-specific ion channel FluC from Thermococcus kodakarensis (strain ATCC BAA-918 / JCM 12380 / KOD1) (Pyrococcus kodakaraensis (strain KOD1)).